The sequence spans 227 residues: Large ribosomal subunit protein uL3 (227 aa).

A disordered region spans residues Arg144–Thr166.

Belongs to the universal ribosomal protein uL3 family. In terms of assembly, part of the 50S ribosomal subunit. Forms a cluster with proteins L14 and L19.

In terms of biological role, one of the primary rRNA binding proteins, it binds directly near the 3'-end of the 23S rRNA, where it nucleates assembly of the 50S subunit. This is Large ribosomal subunit protein uL3 from Trichodesmium erythraeum (strain IMS101).